Consider the following 31-residue polypeptide: Cyclotide mech-6 (31 aa).

Residues 1–31 (GVIPCGESCVFIPCISSVVGCTCKNKVCYRN) constitute a cross-link (cyclopeptide (Gly-Asn)). Cystine bridges form between cysteine 5–cysteine 21, cysteine 9–cysteine 23, and cysteine 14–cysteine 28.

In terms of processing, this is a cyclic peptide. Contains 3 disulfide bonds.

Its function is as follows. Probably participates in a plant defense mechanism (Potential). Binds to and induces leakage in phospholipd membranes, particularly ones containing 1-palmitoyl-2-oleophosphatidylethanolamine (POPE). This is Cyclotide mech-6 from Melicytus chathamicus (Chatham Island mahoe).